Consider the following 991-residue polypeptide: Nonsense-mediated mRNA decay factor SMG8 (991 aa).

3 disordered regions span residues 16–41 (AWMG…PEPP), 82–127 (HQDP…EGNR), and 279–299 (PPRN…PKRR). Low complexity predominate over residues 95–110 (EAGAVGEAGGAEDPGA). Position 115 is a phosphoserine (Ser-115). Over residues 279–289 (PPRNQDPAHPD) the composition is skewed to basic and acidic residues. Residues 290–299 (KPKKHSPKRR) are compositionally biased toward basic residues. Residues Ser-469 and Ser-668 each carry the phosphoserine modification. The segment at 653–722 (FEPSTPDPAP…PQAGGDNPEV (70 aa)) is disordered. A compositionally biased stretch (basic and acidic residues) spans 675–684 (DADKLKEKEP). Residues 685–706 (QTQGESTSLSLALSLGQSTDSL) are compositionally biased toward polar residues. Phosphoserine is present on residues Ser-742 and Ser-895. An Omega-N-methylarginine modification is found at Arg-898.

This sequence belongs to the SMG8 family. As to quaternary structure, component of the SMG1C complex composed of SMG1, SMG8 and SMG9; the recruitment of SMG8 to SMG1 N-terminus induces a large conformational change in the SMG1 C-terminal head domain containing the catalytic domain. Forms heterodimers with SMG9; this assembly form may represent a SMG1C intermediate form. In terms of processing, phosphorylated by SMG1.

Involved in nonsense-mediated decay (NMD) of mRNAs containing premature stop codons. Is recruited by release factors to stalled ribosomes together with SMG1 and SMG9 (forming the SMG1C protein kinase complex) and, in the SMG1C complex, is required to mediate the recruitment of SMG1 to the ribosome:SURF complex and to suppress SMG1 kinase activity until the ribosome:SURF complex locates the exon junction complex (EJC). Acts as a regulator of kinase activity. This chain is Nonsense-mediated mRNA decay factor SMG8 (SMG8), found in Homo sapiens (Human).